Here is an 84-residue protein sequence, read N- to C-terminus: Agaphelin (84 aa).

A signal peptide spans 1–26 (MKMRVHLLAVSVLLVVLALQTTPAEA). The Kazal-like domain occupies 29–82 (NSEMATCACQLIYRPVCASNNESYSNECVLKCASETPTGRSIGLHKVKDGNCNG). Disulfide bonds link cysteine 35-cysteine 60, cysteine 37-cysteine 56, and cysteine 45-cysteine 80. Asparagine 49 is a glycosylation site (N-linked (GlcNAc...) asparagine).

Interacts with human ELANE.

The protein localises to the secreted. Its function is as follows. Functions as a slow and tight inhibitor of host neutrophil elastase (ELANE). Inhibits host proteinase 3 (PRTN3) and chymotrypsin. Does not inhibit other host proteases involved in coagulation or inflammation, such as cathepsin G (CTSG), trypsin, chymase, matriptase, beta-tryptase, kallikrein, urokinase-type plasminogen activator (PLAU), coagulation factors Xa (F10), XIa (F11), XIIa (F12), plasmin (PLG), thrombin (F2) and tissue-type plasminogen activator (PLAT). Inhibits host neutrophil chemotaxis induced by N-formylmethionine-leucyl-phenylalanine (fMLP) in vitro. Inhibits ELANE-mediated potentiation of platelet aggregation induced by CTSG in the host. Does not affect CTSG- or collagen-induced platelet aggregation. Blocks cleavage of tissue factor pathway inhibitor (TFPI) by ELANE in the host. Inhibits neutrophil-induced coagulation in the host by interfering with neutrophil extracellular traps (NET) formation. Exhibits anti-inflammatory activity. Reduces ischemia-induced activation of MAPK and NF-kappa-B pathways in the host. Decreases CCL2 and IL8 production in IL4- or lipopolysaccharide (LPS)-stimulated host epithelial cells. Reduces caspase-3 (CASP3)-dependent apoptosis in damaged host tissues. The polypeptide is Agaphelin (Anopheles gambiae (African malaria mosquito)).